The following is a 349-amino-acid chain: Nicotinate-nucleotide--dimethylbenzimidazole phosphoribosyltransferase (349 aa).

The active-site Proton acceptor is the Glu-318.

This sequence belongs to the CobT family.

The enzyme catalyses 5,6-dimethylbenzimidazole + nicotinate beta-D-ribonucleotide = alpha-ribazole 5'-phosphate + nicotinate + H(+). It participates in nucleoside biosynthesis; alpha-ribazole biosynthesis; alpha-ribazole from 5,6-dimethylbenzimidazole: step 1/2. Its function is as follows. Catalyzes the synthesis of alpha-ribazole-5'-phosphate from nicotinate mononucleotide (NAMN) and 5,6-dimethylbenzimidazole (DMB). This chain is Nicotinate-nucleotide--dimethylbenzimidazole phosphoribosyltransferase, found in Alkaliphilus metalliredigens (strain QYMF).